The primary structure comprises 592 residues: MAEETTPRDPFSVTIRTIRTSIRDAISSVYEVDELIEVPIDENPPVEGADLATPVALSLAKELDENPRELAETIVEESDLDDVVFVEKAWVEGPGFINLKLDRSQYAALTLRSIFYYGEEYGSLDLGMGRPVILEHTSANPNGPLHIGHGRNAVIGDILARCMVFTNYGVEVQYYVNDMGKQIAMLAWKYIKEGRPEVPEGEKPDEFFGKLYTEAAREIEEDPELEEVVERFLRSYERYLVEEESRAERIADAFQTVVEECLRGHIQTLERLRVAHDRFVYESEFARDALEIVEKLLDMGVAEEREDGAVVVDLEDYGIDKELVLTRSDGTTLYTTRDIAYHLWKLGRATFVVDVLGADHKLAVEQLRAVLDMLEENPDRIDVVFYEFIHLPEGSMSTRKGRYVTLDEFLEEAKKRALEKMKAAGVAEELSDEEREKIAEEIAIGAVRFAIARVSPNKPIEFDWDEALDFRRGGPFIQYAYARAKSILRKADEEVNRFDAAYLNDDHSFELILKMSKFPRHVAQCVRKRRPDILAEYAYDLAKTFHTFYEEVPVLHVEDDEVREARLKLVEAFTIVAENLMNLLGIPTLERM.

A 'HIGH' region motif is present at residues 139-149 (ANPNGPLHIGH).

This sequence belongs to the class-I aminoacyl-tRNA synthetase family.

It localises to the cytoplasm. The catalysed reaction is tRNA(Arg) + L-arginine + ATP = L-arginyl-tRNA(Arg) + AMP + diphosphate. The sequence is that of Arginine--tRNA ligase from Methanopyrus kandleri (strain AV19 / DSM 6324 / JCM 9639 / NBRC 100938).